Here is a 157-residue protein sequence, read N- to C-terminus: Phosphopantetheine adenylyltransferase (157 aa).

It belongs to the eukaryotic CoaD family.

The protein localises to the cytoplasm. It carries out the reaction (R)-4'-phosphopantetheine + ATP + H(+) = 3'-dephospho-CoA + diphosphate. The protein operates within cofactor biosynthesis; coenzyme A biosynthesis. Functionally, reversibly transfers an adenylyl group from ATP to 4'-phosphopantetheine, yielding dephospho-CoA (dPCoA) and pyrophosphate. This Methanopyrus kandleri (strain AV19 / DSM 6324 / JCM 9639 / NBRC 100938) protein is Phosphopantetheine adenylyltransferase.